The following is a 243-amino-acid chain: tRNA (guanine-N(1)-)-methyltransferase (243 aa).

S-adenosyl-L-methionine-binding positions include glycine 108 and 127 to 132; that span reads LGDFVL.

It belongs to the RNA methyltransferase TrmD family. As to quaternary structure, homodimer.

It is found in the cytoplasm. The enzyme catalyses guanosine(37) in tRNA + S-adenosyl-L-methionine = N(1)-methylguanosine(37) in tRNA + S-adenosyl-L-homocysteine + H(+). Specifically methylates guanosine-37 in various tRNAs. The sequence is that of tRNA (guanine-N(1)-)-methyltransferase from Streptococcus equi subsp. equi (strain 4047).